The following is a 111-amino-acid chain: Denmotoxin (111 aa).

Positions 1-19 (MKTLLLAVAVVAFVCLGSA) are cleaved as a signal peptide. The propeptide occupies 20–34 (DQLGLGRQQIDWGQG). The residue at position 35 (Q35) is a Pyrrolidone carboxylic acid. 5 cysteine pairs are disulfide-bonded: C44–C68, C47–C55, C61–C87, C91–C102, and C103–C108.

In terms of assembly, monomer. As to expression, expressed by the venom gland.

The protein localises to the secreted. Functionally, this bird-specific postsynaptic neurotoxin irreversibly binds and inhibits the chick muscle alpha-1-beta-1-gamma-delta (CHRNA1-CHRNB1-CHRNG-CHNRD) nicotinic acetylcholine receptor (nAChR) 100-fold more compared with the mouse receptor. The weak binding to mouse receptor is reversible. In Boiga dendrophila (Mangrove snake), this protein is Denmotoxin.